Here is a 162-residue protein sequence, read N- to C-terminus: MNKITHYFKSLLLLELLGGLWLTLKYTFKPKYTVLYPMEKFPQSPRFRGLHALRRYPNGEERCIACKLCEAVCPALAITIDSAKREDGTRRTTRYDIDLFKCIFCGFCEESCPVDSIVETHILEYHFEKRGENIVNKPQLLAIGDRLETEIAERRAADAAFR.

4Fe-4S ferredoxin-type domains follow at residues 53–83 and 93–122; these read LRRY…IDSA and TRYD…ETHI. [4Fe-4S] cluster is bound by residues C63, C66, C69, C73, C102, C105, C108, and C112.

Belongs to the complex I 23 kDa subunit family. As to quaternary structure, NDH-1 is composed of 14 different subunits. Subunits NuoA, H, J, K, L, M, N constitute the membrane sector of the complex. [4Fe-4S] cluster serves as cofactor.

Its subcellular location is the cell inner membrane. The catalysed reaction is a quinone + NADH + 5 H(+)(in) = a quinol + NAD(+) + 4 H(+)(out). Functionally, NDH-1 shuttles electrons from NADH, via FMN and iron-sulfur (Fe-S) centers, to quinones in the respiratory chain. The immediate electron acceptor for the enzyme in this species is believed to be ubiquinone. Couples the redox reaction to proton translocation (for every two electrons transferred, four hydrogen ions are translocated across the cytoplasmic membrane), and thus conserves the redox energy in a proton gradient. This Xanthomonas axonopodis pv. citri (strain 306) protein is NADH-quinone oxidoreductase subunit I.